The primary structure comprises 68 residues: MPKLKTKSAVKKRFKLTASGKVVASQAGKKHFMRRRTKAQIRNLRGTTILCDQDGYNIKKYFLPYGTN.

Belongs to the bacterial ribosomal protein bL35 family.

The sequence is that of Large ribosomal subunit protein bL35 from Rickettsia bellii (strain RML369-C).